Reading from the N-terminus, the 145-residue chain is Peptide methionine sulfoxide reductase MsrB (145 aa).

One can recognise a MsrB domain in the interval 4–127; that stretch reads SEELKQRIGD…NSAALKFIPY (124 aa). Residue C116 is the Nucleophile of the active site.

This sequence belongs to the MsrB Met sulfoxide reductase family.

It catalyses the reaction L-methionyl-[protein] + [thioredoxin]-disulfide + H2O = L-methionyl-(R)-S-oxide-[protein] + [thioredoxin]-dithiol. In Streptococcus pyogenes serotype M6 (strain ATCC BAA-946 / MGAS10394), this protein is Peptide methionine sulfoxide reductase MsrB.